The sequence spans 587 residues: Probable phosphoribomutase (587 aa).

Substrate-binding positions include threonine 49, arginine 53, and 149–150 (SH). Residue serine 149 is the Phosphoserine intermediate of the active site. Mg(2+)-binding residues include serine 149, aspartate 306, aspartate 308, and aspartate 310. At serine 149 the chain carries Phosphoserine. Substrate is bound by residues 310-311 (DR), threonine 380, 404-406 (EEA), and lysine 418.

It belongs to the phosphohexose mutase family. It depends on Mg(2+) as a cofactor.

It localises to the cytoplasm. The protein resides in the nucleus. It catalyses the reaction alpha-D-ribose 1-phosphate = D-ribose 5-phosphate. In terms of biological role, converts ribose 1-phosphate to ribose 5-phosphate. Involved in ribose salvage via the pentose phosphate pathway. In Schizosaccharomyces pombe (strain 972 / ATCC 24843) (Fission yeast), this protein is Probable phosphoribomutase.